We begin with the raw amino-acid sequence, 83 residues long: Putative membrane protein insertion efficiency factor (83 aa).

It belongs to the UPF0161 family.

It localises to the cell membrane. Could be involved in insertion of integral membrane proteins into the membrane. The sequence is that of Putative membrane protein insertion efficiency factor from Streptococcus thermophilus (strain ATCC BAA-250 / LMG 18311).